We begin with the raw amino-acid sequence, 607 residues long: Probable Ufm1-specific protease 2 (607 aa).

Active-site residues include C440, D564, and H566.

This sequence belongs to the peptidase C78 family.

Functionally, thiol protease which recognizes and hydrolyzes the peptide bond at the C-terminal Gly of UFM1, a ubiquitin-like modifier protein bound to a number of target proteins. Does not hydrolyze SUMO1 or ISG15 ubiquitin-like proteins. This chain is Probable Ufm1-specific protease 2, found in Drosophila melanogaster (Fruit fly).